The following is a 433-amino-acid chain: GTPase Obg (433 aa).

Residues 1 to 159 (MGLTDYCECR…LHVSLEIKYL (159 aa)) enclose the Obg domain. The 170-residue stretch at 160-329 (ANVGIVGFPN…LVAQVFALHQ (170 aa)) folds into the OBG-type G domain. GTP-binding positions include 166-173 (GFPNTGKS), 191-195 (FTTLV), 212-215 (DIPG), 282-285 (NKTD), and 310-312 (ISA). Mg(2+) contacts are provided by Ser-173 and Thr-193. Residues 355-433 (ASETDHDPLN…FAGQEFVIND (79 aa)) enclose the OCT domain.

This sequence belongs to the TRAFAC class OBG-HflX-like GTPase superfamily. OBG GTPase family. In terms of assembly, monomer. Mg(2+) serves as cofactor.

The protein resides in the cytoplasm. Its function is as follows. An essential GTPase which binds GTP, GDP and possibly (p)ppGpp with moderate affinity, with high nucleotide exchange rates and a fairly low GTP hydrolysis rate. Plays a role in control of the cell cycle, stress response, ribosome biogenesis and in those bacteria that undergo differentiation, in morphogenesis control. In Mycoplasma pneumoniae (strain ATCC 29342 / M129 / Subtype 1) (Mycoplasmoides pneumoniae), this protein is GTPase Obg.